The sequence spans 353 residues: GTPase Obg (353 aa).

Residues 1-159 (MKFIDEATIK…FELYLELKVL (159 aa)) form the Obg domain. Positions 160–332 (ADVGLLGMPN…LTYAIMEHVE (173 aa)) constitute an OBG-type G domain. GTP contacts are provided by residues 166–173 (GMPNAGKS), 191–195 (FTTLH), 213–216 (DVPG), 284–287 (NKVD), and 313–315 (SAL). 2 residues coordinate Mg(2+): Ser-173 and Thr-193.

The protein belongs to the TRAFAC class OBG-HflX-like GTPase superfamily. OBG GTPase family. Monomer. Requires Mg(2+) as cofactor.

The protein resides in the cytoplasm. Functionally, an essential GTPase which binds GTP, GDP and possibly (p)ppGpp with moderate affinity, with high nucleotide exchange rates and a fairly low GTP hydrolysis rate. Plays a role in control of the cell cycle, stress response, ribosome biogenesis and in those bacteria that undergo differentiation, in morphogenesis control. This is GTPase Obg from Methylobacillus flagellatus (strain ATCC 51484 / DSM 6875 / VKM B-1610 / KT).